The chain runs to 694 residues: Beta-galactosidase (694 aa).

Positions 1–31 (MGKRFPSGWFSPRVHPPRRQRSPMTNQATPG) are disordered. A compositionally biased stretch (polar residues) spans 22-31 (SPMTNQATPG). 2 residues coordinate substrate: arginine 144 and asparagine 182. The active-site Proton donor is glutamate 183. The Nucleophile role is filled by glutamate 341. Substrate is bound by residues tryptophan 349 and 389–392 (EKFH).

This sequence belongs to the glycosyl hydrolase 42 family. In terms of assembly, homotrimer.

The catalysed reaction is Hydrolysis of terminal non-reducing beta-D-galactose residues in beta-D-galactosides.. Its activity is regulated as follows. Strongly inhibited by glucose. No activity is lost during treatment with 100 mM EDTA after 2 hours. Activity not considerably affected by metal ions (5 mM), including Na(+), K(+), Mg(2+), Co(2+) and Ca(2+). Completely inhibited by Cu(2+) and Zn(2+) (5 mM) and is strongly inhibited by Mn(2+) (11%), Fe(2+) (25%) and Ni(2+) (38%) in comparison with the activity in the absence of cations (100%). Activity not affected by dithiothreitol, beta-mercaptoethanol and L-cysteine whereas reduced glutathione almost completely inactivates it. With ONPG as substrate, the addition of ethanol up to 20% still slightly stimulates activity. The activity increases up to 120% in the presence of 8% v/v ethanol at pH 5.5. In terms of biological role, hydrolyzes p-nitrophenyl-beta-D-galactopyranoside (PNPG), o-nitrophenyl-beta-D-galactopyranoside (ONPG) and chromogen 5-bromo-4-chloro-3-indolyl-beta-D-galactopyranoside (X-gal), with highest activity against PNPG. Also acts on p-nitrophenyl-beta-D-glucopyranoside (PNPGlu) and o-nitrophenyl-beta-D-glucopyranoside (ONPGlu), but with significantly lower activity. The chain is Beta-galactosidase from Arthrobacter sp.